Consider the following 195-residue polypeptide: Ethylene-responsive transcription factor ERF018 (195 aa).

Basic and acidic residues predominate over residues 1–13; the sequence is MVKQAMKEEEKKR. The tract at residues 1-22 is disordered; that stretch reads MVKQAMKEEEKKRNTAMQSKYK. Positions 20–77 form a DNA-binding region, AP2/ERF; it reads KYKGVRKRKWGKWVSEIRLPHSRERIWLGSYDTPEKAARAFDAAQFCLRGGDANFNFP.

It belongs to the AP2/ERF transcription factor family. ERF subfamily.

The protein resides in the nucleus. Probably acts as a transcriptional activator. Binds to the GCC-box pathogenesis-related promoter element. May be involved in the regulation of gene expression by stress factors and by components of stress signal transduction pathways. This chain is Ethylene-responsive transcription factor ERF018 (ERF018), found in Arabidopsis thaliana (Mouse-ear cress).